We begin with the raw amino-acid sequence, 795 residues long: Phenylalanine--tRNA ligase beta subunit (795 aa).

One can recognise a tRNA-binding domain in the interval 39 to 148; it reads AAKFNGVLVG…SDAPVGTDLR (110 aa). A B5 domain is found at 401–476; it reads PKVTEVRLRR…RVYGYNSIPN (76 aa). Residues D454, D460, E463, and E464 each coordinate Mg(2+). In terms of domain architecture, FDX-ACB spans 701 to 794; the sequence is SKFPSNRRDI…LAEQFNASLR (94 aa).

Belongs to the phenylalanyl-tRNA synthetase beta subunit family. Type 1 subfamily. As to quaternary structure, tetramer of two alpha and two beta subunits. Mg(2+) serves as cofactor.

It localises to the cytoplasm. The enzyme catalyses tRNA(Phe) + L-phenylalanine + ATP = L-phenylalanyl-tRNA(Phe) + AMP + diphosphate + H(+). The protein is Phenylalanine--tRNA ligase beta subunit of Pseudoalteromonas translucida (strain TAC 125).